The chain runs to 308 residues: Ribosomal RNA small subunit methyltransferase H (308 aa).

Residues 36 to 38 (GGH), D55, F86, D103, and Q110 contribute to the S-adenosyl-L-methionine site.

Belongs to the methyltransferase superfamily. RsmH family.

The protein resides in the cytoplasm. It carries out the reaction cytidine(1402) in 16S rRNA + S-adenosyl-L-methionine = N(4)-methylcytidine(1402) in 16S rRNA + S-adenosyl-L-homocysteine + H(+). Functionally, specifically methylates the N4 position of cytidine in position 1402 (C1402) of 16S rRNA. The chain is Ribosomal RNA small subunit methyltransferase H from Helicobacter pylori (strain B38).